The sequence spans 136 residues: Small ribosomal subunit protein bS6 (136 aa).

Residues 99–136 (QSEMLKAEENRSERRERRERPEHGGHEGLDGDSDKADE) are disordered. Basic and acidic residues predominate over residues 103-136 (LKAEENRSERRERRERPEHGGHEGLDGDSDKADE).

The protein belongs to the bacterial ribosomal protein bS6 family.

In terms of biological role, binds together with bS18 to 16S ribosomal RNA. This chain is Small ribosomal subunit protein bS6, found in Azotobacter vinelandii (strain DJ / ATCC BAA-1303).